Reading from the N-terminus, the 746-residue chain is Protein C-mannosyl-transferase DPY19L1 (746 aa).

Residues 1-68 (MVLQARSKHR…RAGTAAPAPD (68 aa)) are disordered. A phosphoserine mark is found at S28 and S31. The segment covering 59–68 (RAGTAAPAPD) has biased composition (low complexity). 11 helical membrane passes run 137–159 (LYYSYFKTIVEAPSFLNGVWMIM), 227–247 (ACFYVAVIFMLNGLMMALFFI), 257–279 (LGGVVTVLCFFFNHGECTRVMWT), 307–325 (LCRGSLIALCISNVLFMLP), 331–350 (FVLLTQIASLFAVYVVGYID), 357–374 (IIYMHMISLVLCFVLMFG), 380–396 (TSYYASSLVIIWGMLAM), 405–425 (VSELSLWVIQGCGWLFGTVIL), 481–501 (LLLPVVLVTVAAIVRKIFNDM), 520–540 (GELVYHALQLLAYTALGVLIM), and 562–582 (LFGWLFGKVHPGAVVFAILAA).

This sequence belongs to the dpy-19 family.

The protein resides in the endoplasmic reticulum membrane. The enzyme catalyses L-tryptophyl-[protein] + a di-trans,poly-cis-dolichyl beta-D-mannosyl phosphate = C-alpha-D-mannosyl-L-tryptophyl-[protein] + a di-trans,poly-cis-dolichyl phosphate + H(+). It functions in the pathway protein modification; protein glycosylation. In terms of biological role, C-mannosyltransferase that mediates the C-mannosylation tryptophan residues on target proteins. The reaction occurs on the luminal side of the endoplasmic reticulum and involves the transfer of a mannose unit from a dolichylphosphate mannose (Dol-P-Man) donor to an acceptor protein containing a WxxW consensus sequence. C-mannosylates the first two tryptophans in the WxxWxxWxxC sequence motif in thrombospondin (TSP) type-1 repeats of UNC5A. Regulates neurite extension during development. This Mus musculus (Mouse) protein is Protein C-mannosyl-transferase DPY19L1 (Dpy19l1).